Consider the following 40-residue polypeptide: Allophycocyanin alpha-B chain (40 aa).

It belongs to the phycobiliprotein family. As to quaternary structure, heterodimer of an alpha and a beta chain. Contains one covalently linked bilin chromophore.

Its subcellular location is the cellular thylakoid membrane. Light-harvesting photosynthetic bile pigment-protein from the phycobiliprotein complex. Allophycocyanin has a maximum absorption at approximately 650 nanometers. This chain is Allophycocyanin alpha-B chain, found in Mastigocladus laminosus (Fischerella sp.).